Reading from the N-terminus, the 101-residue chain is Urease subunit beta (101 aa).

Belongs to the urease beta subunit family. In terms of assembly, heterotrimer of UreA (gamma), UreB (beta) and UreC (alpha) subunits. Three heterotrimers associate to form the active enzyme.

It localises to the cytoplasm. The enzyme catalyses urea + 2 H2O + H(+) = hydrogencarbonate + 2 NH4(+). Its pathway is nitrogen metabolism; urea degradation; CO(2) and NH(3) from urea (urease route): step 1/1. The polypeptide is Urease subunit beta (Ralstonia nicotianae (strain ATCC BAA-1114 / GMI1000) (Ralstonia solanacearum)).